Consider the following 189-residue polypeptide: Adenylate kinase (189 aa).

An ATP-binding site is contributed by 11 to 16 (GSGKGT). Positions 31-60 (STGDVLRAEIKNGTELGKTAKGYIDQGQLI) are NMP. AMP-binding positions include Thr32, Arg37, 58–60 (QLI), 86–89 (GFPR), and Gln93. The tract at residues 127 to 137 (KRGKDSGRADD) is LID. ATP is bound at residue Arg128. Positions 134 and 145 each coordinate AMP. Position 173 (Gly173) interacts with ATP.

The protein belongs to the adenylate kinase family. As to quaternary structure, monomer.

It localises to the cytoplasm. It carries out the reaction AMP + ATP = 2 ADP. It participates in purine metabolism; AMP biosynthesis via salvage pathway; AMP from ADP: step 1/1. Functionally, catalyzes the reversible transfer of the terminal phosphate group between ATP and AMP. Plays an important role in cellular energy homeostasis and in adenine nucleotide metabolism. The protein is Adenylate kinase of Bacteroides thetaiotaomicron (strain ATCC 29148 / DSM 2079 / JCM 5827 / CCUG 10774 / NCTC 10582 / VPI-5482 / E50).